Consider the following 138-residue polypeptide: Basic phospholipase A2 homolog CTs-K49a (138 aa).

The first 16 residues, 1–16, serve as a signal peptide directing secretion; that stretch reads MRTLWIMAVLLVVVEG. 6 disulfides stabilise this stretch: Cys42/Cys131, Cys44/Cys60, Cys59/Cys111, Cys65/Cys138, Cys66/Cys104, and Cys91/Cys102. Positions 121 to 133 are important for membrane-damaging activities in eukaryotes and bacteria; heparin-binding; sequence KKKKINLKLFCKK.

It belongs to the phospholipase A2 family. Group II subfamily. K49 sub-subfamily. In terms of tissue distribution, expressed by the venom gland.

Its subcellular location is the secreted. Functionally, snake venom phospholipase A2 homolog that lacks catalytic activity. It shows myotoxic and weak anticoagulant activities. A model of myotoxic mechanism has been proposed: an apo Lys49-PLA2 is activated by the entrance of a hydrophobic molecule (e.g. fatty acid) at the hydrophobic channel of the protein leading to a reorientation of a monomer. This reorientation causes a transition between 'inactive' to 'active' states, causing alignment of C-terminal and membrane-docking sites (MDoS) side-by-side and putting the membrane-disruption sites (MDiS) in the same plane, exposed to solvent and in a symmetric position for both monomers. The MDoS region stabilizes the toxin on membrane by the interaction of charged residues with phospholipid head groups. Subsequently, the MDiS region destabilizes the membrane with penetration of hydrophobic residues. This insertion causes a disorganization of the membrane, allowing an uncontrolled influx of ions (i.e. calcium and sodium), and eventually triggering irreversible intracellular alterations and cell death. The chain is Basic phospholipase A2 homolog CTs-K49a from Trimeresurus stejnegeri (Chinese green tree viper).